The primary structure comprises 411 residues: MDLAGLLLDEEGTFSLTGFQDFTFLPGHQKLSARIRRRLYYGWDWETDCTLEELSSPVADIAVELLQKAAPSPIRRLQKKYVAHVSREACISPCAMMLALVYIERLRHRNPDYLQHVSSSDLFLISMMVASKYLYDEGEEEEVFNDEWGAAGGVAVPTLNALERGFLSAMDWRLYTDPREIFEVLSWLEGCVAEQQGRRRGWYTYTDLCVLLEQPAWQLVLGSLCQQLAKLSCLLAMAYVSSVALAVASMAVIHQSLGLSCSPPPGPPDLGLASRCLLEPCIPSPMPQCLPSPANASGCLEGNVVLRSLWGSLLVSLTPPPLPPPDPPAPPILLHNCPLCQKLQKDSPTCRACHHLNHTVPTGPPSPWSHSHGLAPPWPWSPMPPLLPQPQQCSLFSIMELARLKSFIFPG.

A helical membrane pass occupies residues 231–253 (LSCLLAMAYVSSVALAVASMAVI).

It belongs to the CNPPD1 family.

The protein resides in the membrane. The protein is Protein CNPPD1 (CNPPD1) of Bos taurus (Bovine).